The following is a 440-amino-acid chain: Glycerophosphocholine cholinephosphodiesterase ENPP6 (440 aa).

A signal peptide spans 1–22 (MAVKLGTLLLALALGLAQPASA). Substrate contacts are provided by D32, S71, and N92. Zn(2+) contacts are provided by D32 and S71. S71 (nucleophile) is an active-site residue. S71 carries the post-translational modification Phosphoserine. N-linked (GlcNAc...) asparagine glycans are attached at residues N100 and N118. A disulfide bridge links C142 with C154. Position 193 (D193) interacts with substrate. Residues D193, H197, D240, and H241 each coordinate Zn(2+). A substrate-binding site is contributed by H241. N-linked (GlcNAc...) asparagine glycosylation is present at N341. H354 is a substrate binding site. H354 is a binding site for Zn(2+). An N-linked (GlcNAc...) asparagine glycan is attached at N404. The GPI-anchor amidated alanine moiety is linked to residue A418. Residues 419 to 440 (GTTPPVQPSHCALALILLFLLA) constitute a propeptide, removed in mature form.

The protein belongs to the nucleotide pyrophosphatase/phosphodiesterase family. In terms of assembly, homodimer; disulfide-linked. Homotetramer. Zn(2+) serves as cofactor.

The protein localises to the cell membrane. The enzyme catalyses sn-glycerol 3-phosphocholine + H2O = phosphocholine + glycerol + H(+). It carries out the reaction a 1-acyl-sn-glycero-3-phosphocholine + H2O = a 1-acyl-sn-glycerol + phosphocholine + H(+). The catalysed reaction is a 1-O-alkyl-sn-glycero-3-phosphocholine + H2O = a 1-O-alkyl-sn-glycerol + phosphocholine + H(+). It catalyses the reaction 1-dodecanoyl-sn-glycero-3-phosphocholine + H2O = 1-dodecanoyl-sn-glycerol + phosphocholine + H(+). The enzyme catalyses 1-hexadecanoyl-sn-glycero-3-phosphocholine + H2O = 1-hexadecanoyl-sn-glycerol + phosphocholine + H(+). It carries out the reaction 1-(5Z,8Z,11Z,14Z-eicosatetraenoyl)-sn-glycero-3-phosphocholine + H2O = 1-(5Z,8Z,11Z,14Z-eicosatetraenoyl)-sn-glycerol + phosphocholine + H(+). The catalysed reaction is 1-tetradecanoyl-sn-glycero-3-phosphocholine + H2O = 1-tetradecanoyl-sn-glycerol + phosphocholine + H(+). It catalyses the reaction sphing-4-enine-phosphocholine + H2O = sphing-4-enine + phosphocholine + H(+). The enzyme catalyses 1-(9Z-octadecenoyl)-sn-glycero-3-phosphocholine + H2O = 1-(9Z-octadecenoyl)-sn-glycerol + phosphocholine + H(+). It carries out the reaction 1-(9Z,12Z)-octadecadienoyl-sn-glycero-3-phosphocholine + H2O = 1-(9Z,12Z-octadecadienoyl)-sn-glycerol + phosphocholine + H(+). The catalysed reaction is glycero-2-phosphocholine + H2O = phosphocholine + glycerol + H(+). Inhibited by EDTA and EGTA in vitro. Functionally, choline-specific glycerophosphodiesterase that hydrolyzes glycerophosphocholine (GPC) and lysophosphatidylcholine (LPC) and contributes to supplying choline to the cells. Has a preference for LPC with short (12:0 and 14:0) or polyunsaturated (18:2 and 20:4) fatty acids. In vitro, hydrolyzes only choline-containing lysophospholipids, such as sphingosylphosphorylcholine (SPC), platelet-activating factor (PAF) and lysoPAF, but not other lysophospholipids. This Pongo abelii (Sumatran orangutan) protein is Glycerophosphocholine cholinephosphodiesterase ENPP6.